A 185-amino-acid polypeptide reads, in one-letter code: Ribosome-recycling factor (185 aa).

This sequence belongs to the RRF family.

The protein localises to the cytoplasm. Its function is as follows. Responsible for the release of ribosomes from messenger RNA at the termination of protein biosynthesis. May increase the efficiency of translation by recycling ribosomes from one round of translation to another. This chain is Ribosome-recycling factor, found in Idiomarina loihiensis (strain ATCC BAA-735 / DSM 15497 / L2-TR).